The following is a 350-amino-acid chain: tRNA uridine(34) hydroxylase (350 aa).

The Rhodanese domain occupies 128 to 221; that stretch reads EETDYVMIDT…YMKEYPNDQF (94 aa). Cys-181 acts as the Cysteine persulfide intermediate in catalysis.

Belongs to the TrhO family.

The catalysed reaction is uridine(34) in tRNA + AH2 + O2 = 5-hydroxyuridine(34) in tRNA + A + H2O. Its function is as follows. Catalyzes oxygen-dependent 5-hydroxyuridine (ho5U) modification at position 34 in tRNAs. This Bdellovibrio bacteriovorus (strain ATCC 15356 / DSM 50701 / NCIMB 9529 / HD100) protein is tRNA uridine(34) hydroxylase.